Here is a 724-residue protein sequence, read N- to C-terminus: Probable protein phosphatase 2C 62 (724 aa).

The tract at residues 357–385 (DELISTSEATRHSVDEIAQKPIIDTSEKN) is disordered. Basic and acidic residues predominate over residues 365-374 (ATRHSVDEIA). Positions 482–719 (DSGFASLQSP…DAVTVIISFV (238 aa)) constitute a PPM-type phosphatase domain. 4 residues coordinate Mn(2+): Asp514, Gly515, Asp643, and Asp710.

This sequence belongs to the PP2C family. Mg(2+) serves as cofactor. Requires Mn(2+) as cofactor.

It catalyses the reaction O-phospho-L-seryl-[protein] + H2O = L-seryl-[protein] + phosphate. The catalysed reaction is O-phospho-L-threonyl-[protein] + H2O = L-threonyl-[protein] + phosphate. This is Probable protein phosphatase 2C 62 from Arabidopsis thaliana (Mouse-ear cress).